The chain runs to 219 residues: Lipid transferase CIDEB (219 aa).

T18 is modified (phosphothreonine). In terms of domain architecture, CIDE-N spans 34-110 (PQRPFRVCDH…VLEQGQSWSP (77 aa)).

This sequence belongs to the CIDE family. In terms of assembly, interacts with DFFA. Interacts with DFFB; inhibited by DFFB. Interacts with APOB. Interacts with PREB/SEC12; facilitating loading of SCAP-SREBP into COPII vesicles. Highly enriched in the liver.

The protein resides in the lipid droplet. The protein localises to the endoplasmic reticulum membrane. It localises to the golgi apparatus. Its subcellular location is the cytoplasmic vesicle. It is found in the COPI-coated vesicle. In terms of biological role, lipid transferase specifically expressed in hepatocytes, which promotes unilocular lipid droplet formation by mediating lipid droplet fusion. Lipid droplet fusion promotes their enlargement, restricting lipolysis and favoring lipid storage. Localizes on the lipid droplet surface, at focal contact sites between lipid droplets, and mediates atypical lipid droplet fusion by promoting directional net neutral lipid transfer from the smaller to larger lipid droplets. The transfer direction may be driven by the internal pressure difference between the contacting lipid droplet pair. Promotes lipid exchange and lipid droplet fusion in both small and large lipid droplet-containing hepatocytes. In addition to its role in lipid droplet fusion, also involved in cytoplasmic vesicle biogenesis and transport. Required for very-low-density lipoprotein (VLDL) lipidation and maturation. Probably involved in the biogenesis of VLDL transport vesicles by forming a COPII vesicle coat and facilitating the formation of endoplasmic reticulum-derived large vesicles. Also involved in sterol-regulated export of the SCAP-SREBP complex, composed of SCAP, SREBF1/SREBP1 and SREBF2/SREBP2, by promoting loading of SCAP-SREBP into COPII vesicles. May also activate apoptosis. This chain is Lipid transferase CIDEB, found in Mus musculus (Mouse).